A 183-amino-acid polypeptide reads, in one-letter code: uncharacterized protein (183 aa).

Belongs to the Bcl-2 family.

This is an uncharacterized protein from Equine herpesvirus 2 (strain 86/87) (EHV-2).